The following is a 162-amino-acid chain: Cadmium metallothionein (162 aa).

A propeptide spanning residues 1–2 is cleaved from the precursor; sequence MD.

The metallothioneins are involved in the cellular sequestration of toxic metal ions. The protein is Cadmium metallothionein (MTT1) of Tetrahymena thermophila.